The primary structure comprises 527 residues: MGKLLLWVGLVLVLKHHNGAAHKLVCYFANWAFSRPGPASILPRDLDPFLCTHLVFAFASMNDSQIVAKDARDESIFYPEFNQLKERNEKLKTLLSIGGWNFGTSRFTTMLSTFTNREKFIRSAIGLLRTHGFDGLDLFFLYPGLRGSPRRDRWNFLFLLEELLLAFRREAQLTMRPRLLLSAAVSADPHVIQKAYDVRLLGRLLDFINVLSYDLHGSWEKVTGHNSPLFSLSDDPKSSAYTMNYWRKLGAPPEKLLMGFPTYGRTFRLLKASKNELGAEAVGPASPGKYTKQAGFLAYYEVCSFVQRAKKRWIDHQYVPYAYRGKEWVGYDDDISFSYKAFFIKKEHFGGAMVWTLDLDDVRGTFCGTGPFPLVYMLNDLLLKAEVSSTLSPGFGLSTTVNSSRTCPESLAVTKDLTTDLGILPLGGEAVATETHGRSDNMTVTPGGGLVAPTRPTLSFGKLTVAPEGKTESPGEKAMTPVGHPSVTPGDMSVPPVPIQTGDRITPPRRQAVAPEKMTLPSGKRSD.

A signal peptide spans 1–21 (MGKLLLWVGLVLVLKHHNGAA). Positions 22–385 (HKLVCYFANW…YMLNDLLLKA (364 aa)) constitute a GH18 domain. Cysteines 26 and 51 form a disulfide. Residue Asn-62 is glycosylated (N-linked (GlcNAc...) asparagine). Chitin contacts are provided by residues 71-72 (AR), 98-101 (GGWN), Tyr-142, 211-214 (LSYD), and Trp-355. Asn-402 and Asn-441 each carry an N-linked (GlcNAc...) asparagine glycan. Positions 433–527 (TETHGRSDNM…MTLPSGKRSD (95 aa)) are disordered.

This sequence belongs to the glycosyl hydrolase 18 family. In terms of tissue distribution, oviduct.

Its subcellular location is the cytoplasmic vesicle. The protein localises to the secretory vesicle. In terms of biological role, binds to oocyte zona pellucida in vivo. May play a role in the fertilization process and/or early embryonic development. The protein is Oviduct-specific glycoprotein (OVGP1) of Sus scrofa (Pig).